Consider the following 363-residue polypeptide: UDP-N-acetylglucosamine--N-acetylmuramyl-(pentapeptide) pyrophosphoryl-undecaprenol N-acetylglucosamine transferase (363 aa).

Residues 14–16 (TGG), Asn-122, Arg-163, Ser-190, and Gln-285 contribute to the UDP-N-acetyl-alpha-D-glucosamine site.

This sequence belongs to the glycosyltransferase 28 family. MurG subfamily.

It localises to the cell inner membrane. It catalyses the reaction di-trans,octa-cis-undecaprenyl diphospho-N-acetyl-alpha-D-muramoyl-L-alanyl-D-glutamyl-meso-2,6-diaminopimeloyl-D-alanyl-D-alanine + UDP-N-acetyl-alpha-D-glucosamine = di-trans,octa-cis-undecaprenyl diphospho-[N-acetyl-alpha-D-glucosaminyl-(1-&gt;4)]-N-acetyl-alpha-D-muramoyl-L-alanyl-D-glutamyl-meso-2,6-diaminopimeloyl-D-alanyl-D-alanine + UDP + H(+). Its pathway is cell wall biogenesis; peptidoglycan biosynthesis. Functionally, cell wall formation. Catalyzes the transfer of a GlcNAc subunit on undecaprenyl-pyrophosphoryl-MurNAc-pentapeptide (lipid intermediate I) to form undecaprenyl-pyrophosphoryl-MurNAc-(pentapeptide)GlcNAc (lipid intermediate II). The chain is UDP-N-acetylglucosamine--N-acetylmuramyl-(pentapeptide) pyrophosphoryl-undecaprenol N-acetylglucosamine transferase from Prochlorococcus marinus (strain MIT 9312).